The chain runs to 126 residues: UPF0102 protein BCAN_A0183 (126 aa).

This sequence belongs to the UPF0102 family.

The sequence is that of UPF0102 protein BCAN_A0183 from Brucella canis (strain ATCC 23365 / NCTC 10854 / RM-666).